The sequence spans 418 residues: Adenylosuccinate synthetase 2 (418 aa).

GTP contacts are provided by residues 12-18 (GDEGKGR) and 40-42 (GHT). Catalysis depends on Asp13, which acts as the Proton acceptor. Residues Asp13 and Gly40 each contribute to the Mg(2+) site. Residues 13–16 (DEGK), 38–41 (NAGH), Thr127, Lys141, Thr239, and Arg301 contribute to the IMP site. Residue His41 is the Proton donor of the active site. 297–303 (AVTGRPR) provides a ligand contact to substrate. Residues Arg303, 329–331 (KID), and 407–409 (SVG) each bind GTP.

This sequence belongs to the adenylosuccinate synthetase family. In terms of assembly, homodimer. The cofactor is Mg(2+).

The protein resides in the cytoplasm. The enzyme catalyses IMP + L-aspartate + GTP = N(6)-(1,2-dicarboxyethyl)-AMP + GDP + phosphate + 2 H(+). It participates in purine metabolism; AMP biosynthesis via de novo pathway; AMP from IMP: step 1/2. Functionally, plays an important role in the de novo pathway of purine nucleotide biosynthesis. Catalyzes the first committed step in the biosynthesis of AMP from IMP. The protein is Adenylosuccinate synthetase 2 of Pseudoalteromonas translucida (strain TAC 125).